Consider the following 707-residue polypeptide: Elongation factor G (707 aa).

Residues E8–V297 form the tr-type G domain. Residues A17–T24, D96–H100, and N150–D153 each bind GTP.

The protein belongs to the TRAFAC class translation factor GTPase superfamily. Classic translation factor GTPase family. EF-G/EF-2 subfamily.

The protein localises to the cytoplasm. Functionally, catalyzes the GTP-dependent ribosomal translocation step during translation elongation. During this step, the ribosome changes from the pre-translocational (PRE) to the post-translocational (POST) state as the newly formed A-site-bound peptidyl-tRNA and P-site-bound deacylated tRNA move to the P and E sites, respectively. Catalyzes the coordinated movement of the two tRNA molecules, the mRNA and conformational changes in the ribosome. This chain is Elongation factor G, found in Synechococcus sp. (strain JA-2-3B'a(2-13)) (Cyanobacteria bacterium Yellowstone B-Prime).